Here is a 618-residue protein sequence, read N- to C-terminus: Grainyhead-like protein 1 homolog (618 aa).

Positions M1–S91 are transcription activation. The segment covering R74–K92 has biased composition (basic and acidic residues). The tract at residues R74–N94 is disordered. Residue T208 is modified to Phosphothreonine. In terms of domain architecture, Grh/CP2 DB spans S248–I474. Interaction with DNA stretches follow at residues T380 to K389 and R427 to R430.

This sequence belongs to the grh/CP2 family. Grainyhead subfamily. Binds DNA as homodimer. Homodimer, also forms heterodimers with GRHL2 or GRHL3. In terms of processing, methylation at Arg-9 and Lys-116 may be involved in regulating transcriptional activation. Isoform 1 is highly expressed in brain, pancreas, tonsil, placenta and kidney. Isoform 2 is highly expressed in brain and liver. Expressed at very low levels in non-steroidogenic cells.

The protein localises to the nucleus. In terms of biological role, transcription factor involved in epithelial development. Binds directly to the consensus DNA sequence 5'-AACCGGTT-3'. Important regulator of DSG1 in the context of hair anchorage and epidermal differentiation, participates in the maintenance of the skin barrier. There is no genetic interaction with GRHL3, nor functional cooperativity due to diverse target gene selectivity during epithelia development. May play a role in regulating glucose homeostasis and insulin signaling. Functions as a transcription activator. Its function is as follows. May function as a repressor in tissues where both isoform 1 and isoform 2 are expressed. The sequence is that of Grainyhead-like protein 1 homolog from Homo sapiens (Human).